The following is a 550-amino-acid chain: Glucose-6-phosphate isomerase (550 aa).

The active-site Proton donor is Glu356. Active-site residues include His387 and Lys515.

The protein belongs to the GPI family.

The protein resides in the cytoplasm. The catalysed reaction is alpha-D-glucose 6-phosphate = beta-D-fructose 6-phosphate. The protein operates within carbohydrate biosynthesis; gluconeogenesis. Its pathway is carbohydrate degradation; glycolysis; D-glyceraldehyde 3-phosphate and glycerone phosphate from D-glucose: step 2/4. In terms of biological role, catalyzes the reversible isomerization of glucose-6-phosphate to fructose-6-phosphate. The polypeptide is Glucose-6-phosphate isomerase (Photobacterium profundum (strain SS9)).